We begin with the raw amino-acid sequence, 493 residues long: Glutamate--tRNA ligase (493 aa).

Residues proline 10–threonine 20 carry the 'HIGH' region motif. Residues lysine 251–arginine 255 carry the 'KMSKS' region motif. Lysine 254 lines the ATP pocket.

This sequence belongs to the class-I aminoacyl-tRNA synthetase family. Glutamate--tRNA ligase type 1 subfamily. Monomer.

It localises to the cytoplasm. It catalyses the reaction tRNA(Glu) + L-glutamate + ATP = L-glutamyl-tRNA(Glu) + AMP + diphosphate. Catalyzes the attachment of glutamate to tRNA(Glu) in a two-step reaction: glutamate is first activated by ATP to form Glu-AMP and then transferred to the acceptor end of tRNA(Glu). The polypeptide is Glutamate--tRNA ligase (Pseudomonas entomophila (strain L48)).